The chain runs to 125 residues: Protein ApaG (125 aa).

The ApaG domain occupies 1–125 (MIDAPRIIVQ…FRLAIPSLIN (125 aa)).

The protein is Protein ApaG of Edwardsiella ictaluri (strain 93-146).